The chain runs to 341 residues: DnaJ homolog subfamily C member 22 (341 aa).

The 47-residue stretch at 4–50 folds into the TM2 domain; that stretch reads GLLMTYALWAFGGPVGLHHLYLGRDSHALLWMLTLGGGGLGWLWEFW. 7 helical membrane passes run 5-25, 30-50, 81-101, 105-125, 135-155, 185-205, and 232-252; these read LLMTYALWAFGGPVGLHHLYL, HALLWMLTLGGGGLGWLWEFW, FASQMVVGVYFGLVALISLSS, FYIVGLPLAVGLGVLLVAAVG, LGAAFLTSPVFYGRPIAILPI, VGLAYLAFTGPLAYSTLYNTA, and VESVLLLPCRIWWLLVGAPGF. Residues 277–341 enclose the J domain; the sequence is LAHQVLGIPE…QPKKPRASWR (65 aa).

It localises to the membrane. May function as a co-chaperone. In Rattus norvegicus (Rat), this protein is DnaJ homolog subfamily C member 22 (Dnajc22).